Here is a 254-residue protein sequence, read N- to C-terminus: Serine acetyltransferase (254 aa).

The protein belongs to the transferase hexapeptide repeat family.

It is found in the cytoplasm. The enzyme catalyses L-serine + acetyl-CoA = O-acetyl-L-serine + CoA. It functions in the pathway amino-acid biosynthesis; L-cysteine biosynthesis; L-cysteine from L-serine: step 1/2. In Buchnera aphidicola subsp. Baizongia pistaciae (strain Bp), this protein is Serine acetyltransferase (cysE).